We begin with the raw amino-acid sequence, 409 residues long: MPGPQGGTGAPTMSLGKLSPVGWVSSSHGKRRLTADMISPPLGDFRHTMHVGRGGDVFGDTSFLSNHGGRSGNTHRSPRSFLARKLQQVRRVGVPPRRMASPAAPSPAPPPISPIIKNAISLPQLNQATYDSLVMGKLSFDSTPASSTDGHSGYGLESGFCTISRLPRVEKHSNRDRDRDPDHSQDREQSSFPSEPTPNPELRRSDSLLSFRFDLDLGPSLLSELLGVMSLSEAPAAETPVPTANPPAPAANPAPTAKPPAHAITTLDAVTSLPASAVTSLPAPAAASSPSRGHFPNGVTSVLGPAAEAKPSPVGEGPQVPSNMTFDRHGASWGASRASWGASRASRHYTEMDARRELAGVLPQVHGSWESLNEDWSTPPASVRAPVPTSVQVNAFEFADAEEDDEVKV.

The segment at Met1–Gly29 is disordered. Phosphoserine is present on residues Ser19 and Ser27. At Thr34 the chain carries Phosphothreonine. Residues Ile38–Gly52 enclose the CRIB domain. Ser39 carries the phosphoserine modification. The residue at position 53 (Arg53) is an Omega-N-methylarginine. Phosphoserine is present on residues Ser65, Ser77, Ser101, Ser113, Ser121, and Ser139. The segment covering Pro167–Gln189 has biased composition (basic and acidic residues). Positions Pro167–Arg203 are disordered. 4 positions are modified to phosphoserine: Ser191, Ser205, Ser207, and Ser210. Repeat copies occupy residues Pro235–Val241, Pro242–Ala248, and Pro255–Ala261. The interval Pro235–Pro284 is 3 X 7 AA tandem repeats of [PT]-[AT]-A-[ENT]-[PT]-[PTS]-[AG]. Disordered stretches follow at residues Ala237–Pro260 and Pro282–His329. Residues Thr243–Lys258 show a composition bias toward pro residues. Low complexity predominate over residues Pro282–Ser291. A phosphoserine mark is found at Ser312, Ser332, Ser368, and Ser371.

The protein belongs to the BORG/CEP family. Interacts with RHOQ and CDC42, in a GTP-dependent manner.

It is found in the endomembrane system. Its subcellular location is the cytoplasm. The protein resides in the cytoskeleton. Functionally, probably involved in the organization of the actin cytoskeleton. Induced membrane extensions in fibroblasts. This is Cdc42 effector protein 1 (Cdc42ep1) from Mus musculus (Mouse).